The sequence spans 714 residues: Polyribonucleotide nucleotidyltransferase (714 aa).

Positions 487 and 493 each coordinate Mg(2+). The KH domain maps to 554-613; that stretch reads PRIEVMTIPVDKIREVIGSGGKVIREIVEKTGAKINIEDDGTIKIASASGKEIEAARKWI. One can recognise an S1 motif domain in the interval 623 to 691; it reads GVVYEGTVVK…ERGKVRLSMK (69 aa).

This sequence belongs to the polyribonucleotide nucleotidyltransferase family. The cofactor is Mg(2+).

It is found in the cytoplasm. It carries out the reaction RNA(n+1) + phosphate = RNA(n) + a ribonucleoside 5'-diphosphate. Functionally, involved in mRNA degradation. Catalyzes the phosphorolysis of single-stranded polyribonucleotides processively in the 3'- to 5'-direction. This chain is Polyribonucleotide nucleotidyltransferase, found in Allorhizobium ampelinum (strain ATCC BAA-846 / DSM 112012 / S4) (Agrobacterium vitis (strain S4)).